Here is a 101-residue protein sequence, read N- to C-terminus: UPF0473 protein spr0177 (101 aa).

This sequence belongs to the UPF0473 family.

The protein is UPF0473 protein spr0177 of Streptococcus pneumoniae (strain ATCC BAA-255 / R6).